A 414-amino-acid polypeptide reads, in one-letter code: uncharacterized protein (414 aa).

Positions 1–20 (MKKLLAIGILCIMVTAVMSG) are cleaved as a signal peptide. Cys-21 carries the S-archaeol cysteine lipid modification. The 271-residue stretch at 119–389 (RVIVMSSTEI…DLATILHPEA (271 aa)) folds into the Fe/B12 periplasmic-binding domain.

Its subcellular location is the cell membrane. This is an uncharacterized protein from Methanocaldococcus jannaschii (strain ATCC 43067 / DSM 2661 / JAL-1 / JCM 10045 / NBRC 100440) (Methanococcus jannaschii).